A 254-amino-acid chain; its full sequence is Glucosamine-6-phosphate deaminase (254 aa).

Residue Asp-63 is the Proton acceptor; for enolization step of the active site. Asn-129 acts as the For ring-opening step in catalysis. His-131 acts as the Proton acceptor; for ring-opening step in catalysis. Residue Glu-136 is the For ring-opening step of the active site.

The protein belongs to the glucosamine/galactosamine-6-phosphate isomerase family. NagB subfamily.

The catalysed reaction is alpha-D-glucosamine 6-phosphate + H2O = beta-D-fructose 6-phosphate + NH4(+). Its pathway is amino-sugar metabolism; N-acetylneuraminate degradation; D-fructose 6-phosphate from N-acetylneuraminate: step 5/5. Catalyzes the reversible isomerization-deamination of glucosamine 6-phosphate (GlcN6P) to form fructose 6-phosphate (Fru6P) and ammonium ion. The chain is Glucosamine-6-phosphate deaminase from Exiguobacterium sp. (strain ATCC BAA-1283 / AT1b).